Here is a 387-residue protein sequence, read N- to C-terminus: Zinc finger protein neuro-d4 (387 aa).

Glycyl lysine isopeptide (Lys-Gly) (interchain with G-Cter in SUMO2) cross-links involve residues K106, K129, and K133. The C2H2-type zinc-finger motif lies at 195–218; the sequence is YVCDICGKRYKNRPGLSYHYTHTH. 2 PHD-type zinc fingers span residues 271–328 and 325–375; these read NGYC…CKSC and CKSC…CLRH. Zn(2+) contacts are provided by C274, C277, C293, C296, H301, C304, C322, C325, C328, C331, C343, C346, H351, C354, C369, and C372.

This sequence belongs to the requiem/DPF family. In terms of assembly, component of neuron-specific chromatin remodeling complex (nBAF complex) composed of at least, ARID1A/BAF250A or ARID1B/BAF250B, SMARCD1/BAF60A, SMARCD3/BAF60C, SMARCA2/BRM/BAF190B, SMARCA4/BRG1/BAF190A, SMARCB1/BAF47, SMARCC1/BAF155, SMARCE1/BAF57, SMARCC2/BAF170, DPF1/BAF45B, DPF3/BAF45C, ACTL6B/BAF53B and actin.

The protein resides in the cytoplasm. The protein localises to the nucleus. Functionally, may have an important role in developing neurons by participating in regulation of cell survival, possibly as a neurospecific transcription factor. Belongs to the neuron-specific chromatin remodeling complex (nBAF complex). During neural development a switch from a stem/progenitor to a postmitotic chromatin remodeling mechanism occurs as neurons exit the cell cycle and become committed to their adult state. The transition from proliferating neural stem/progenitor cells to postmitotic neurons requires a switch in subunit composition of the npBAF and nBAF complexes. As neural progenitors exit mitosis and differentiate into neurons, npBAF complexes which contain ACTL6A/BAF53A and PHF10/BAF45A, are exchanged for homologous alternative ACTL6B/BAF53B and DPF1/BAF45B or DPF3/BAF45C subunits in neuron-specific complexes (nBAF). The npBAF complex is essential for the self-renewal/proliferative capacity of the multipotent neural stem cells. The nBAF complex along with CREST plays a role regulating the activity of genes essential for dendrite growth. The sequence is that of Zinc finger protein neuro-d4 from Homo sapiens (Human).